The chain runs to 278 residues: Deoxyribonuclease-1-like 2 (278 aa).

The signal sequence occupies residues 1–21; that stretch reads MGWPWAPLTAVWALGVMGATA. Active-site residues include Glu-99 and His-150. Residues Cys-189 and Cys-225 are joined by a disulfide bond.

The protein belongs to the DNase I family. The cofactor is Mg(2+). Ca(2+) is required as a cofactor.

It is found in the cytoplasm. Its subcellular location is the secreted. Functionally, divalent cation-dependent acid DNA endonuclease involved in the breakdown of the nucleus during corneocyte formation of epidermal keratinocytes. May play an immune role by eliminating harmful DNA released into the extracellular environment by damaged epidermal cells. This chain is Deoxyribonuclease-1-like 2 (Dnase1l2), found in Mus musculus (Mouse).